Reading from the N-terminus, the 397-residue chain is Transcription factor GATA-5 (397 aa).

The segment at 48-116 (GCEPSPQPPE…SAGGRDGSAY (69 aa)) is disordered. Over residues 87-101 (PPGATAFPFAHSPSG) the composition is skewed to low complexity. Residues 102-112 (PGSGGSAGGRD) are compositionally biased toward gly residues. GATA-type zinc fingers lie at residues 189–213 (CVNCGALSTPLWRRDGTGHYLCNAC) and 243–267 (CTNCHTTNTTLWRRNSEGEPVCNAC). Residues 281-356 (AMKKESIQTR…ASGQEDDSLA (76 aa)) are disordered. Basic residues predominate over residues 289-298 (TRKRKPKTIA). The segment covering 310-335 (ASASPSAVASTDSSAATSKAKPSLAS) has biased composition (low complexity).

It localises to the nucleus. In terms of biological role, transcription factor required during cardiovascular development. Plays an important role in the transcriptional program(s) that underlies smooth muscle cell diversity. Binds to the functionally important CEF-1 nuclear protein binding site in the cardiac-specific slow/cardiac troponin C transcriptional enhancer. The chain is Transcription factor GATA-5 from Homo sapiens (Human).